The sequence spans 510 residues: GMP synthase [glutamine-hydrolyzing] (510 aa).

A Glutamine amidotransferase type-1 domain is found at 5–195; it reads LVLVVDFGGQ…LFNVCNLKGD (191 aa). Cysteine 82 serves as the catalytic Nucleophile. Active-site residues include histidine 169 and glutamate 171. A GMPS ATP-PPase domain is found at 196–385; it reads WSMSSFAEQQ…LGIPHKLVWR (190 aa). Residue 223-229 participates in ATP binding; it reads SGGVDSS.

In terms of assembly, homodimer.

The catalysed reaction is XMP + L-glutamine + ATP + H2O = GMP + L-glutamate + AMP + diphosphate + 2 H(+). The protein operates within purine metabolism; GMP biosynthesis; GMP from XMP (L-Gln route): step 1/1. Catalyzes the synthesis of GMP from XMP. This chain is GMP synthase [glutamine-hydrolyzing], found in Clostridium botulinum (strain Loch Maree / Type A3).